We begin with the raw amino-acid sequence, 206 residues long: Thymidylate kinase (206 aa).

10-17 contributes to the ATP binding site; sequence GNDGSGKS.

It belongs to the thymidylate kinase family.

The catalysed reaction is dTMP + ATP = dTDP + ADP. Its function is as follows. Phosphorylation of dTMP to form dTDP in both de novo and salvage pathways of dTTP synthesis. The chain is Thymidylate kinase from Caldicellulosiruptor saccharolyticus (strain ATCC 43494 / DSM 8903 / Tp8T 6331).